Here is a 140-residue protein sequence, read N- to C-terminus: Large ribosomal subunit protein bL21 (140 aa).

Residues 106 to 140 are disordered; sequence SGVKPAVGARTKIEPAVKPAKAKKSEAEASAEDAN.

It belongs to the bacterial ribosomal protein bL21 family. In terms of assembly, part of the 50S ribosomal subunit. Contacts protein L20.

In terms of biological role, this protein binds to 23S rRNA in the presence of protein L20. In Paracoccus denitrificans (strain Pd 1222), this protein is Large ribosomal subunit protein bL21.